The following is a 251-amino-acid chain: Adenosylcobinamide-GDP ribazoletransferase (251 aa).

The next 6 membrane-spanning stretches (helical) occupy residues Phe29–Val49, Ser65–Met85, Ala110–Leu130, Leu136–Tyr156, Ala175–Phe195, and Leu198–Trp218.

It belongs to the CobS family. It depends on Mg(2+) as a cofactor.

Its subcellular location is the cell inner membrane. It catalyses the reaction alpha-ribazole + adenosylcob(III)inamide-GDP = adenosylcob(III)alamin + GMP + H(+). It carries out the reaction alpha-ribazole 5'-phosphate + adenosylcob(III)inamide-GDP = adenosylcob(III)alamin 5'-phosphate + GMP + H(+). The protein operates within cofactor biosynthesis; adenosylcobalamin biosynthesis; adenosylcobalamin from cob(II)yrinate a,c-diamide: step 7/7. Joins adenosylcobinamide-GDP and alpha-ribazole to generate adenosylcobalamin (Ado-cobalamin). Also synthesizes adenosylcobalamin 5'-phosphate from adenosylcobinamide-GDP and alpha-ribazole 5'-phosphate. This chain is Adenosylcobinamide-GDP ribazoletransferase, found in Synechococcus elongatus (strain ATCC 33912 / PCC 7942 / FACHB-805) (Anacystis nidulans R2).